The sequence spans 113 residues: Putative pterin-4-alpha-carbinolamine dehydratase (113 aa).

This sequence belongs to the pterin-4-alpha-carbinolamine dehydratase family.

The catalysed reaction is (4aS,6R)-4a-hydroxy-L-erythro-5,6,7,8-tetrahydrobiopterin = (6R)-L-erythro-6,7-dihydrobiopterin + H2O. The polypeptide is Putative pterin-4-alpha-carbinolamine dehydratase (Hydrogenovibrio crunogenus (strain DSM 25203 / XCL-2) (Thiomicrospira crunogena)).